The sequence spans 313 residues: Protein OPG185 (313 aa).

The signal sequence occupies residues 1 to 16 (MTQLPILLLLISLVYA). Residues 17–274 (TPSPQTSKKI…TSISNYKTKD (258 aa)) are Virion surface-facing. N-linked (GlcNAc...) asparagine; by host glycans are attached at residues Asn37, Asn69, Asn112, Asn159, Asn194, and Asn252. Residues 275 to 295 (FVEIFGITTLIILSAVAIFCI) form a helical membrane-spanning segment. Residues 296–313 (TYYICNKHPRKYKTENKV) are Intravirion-facing.

The protein belongs to the orthopoxvirus OPG185 family. As to quaternary structure, heterodimerizes with OPG040. The heterodimer OPG185-OPG040 interacts with components of the entry fusion complex OPG143 and OPG094. Heterodimer with C3/VPC protein; disulfide-linked. Glycosylated; contains phosphate and sulfate-substituted glycans. O-glycosylation is required for hemagglutination and hemadsorption activities of infected cell membranes.

The protein resides in the virion membrane. It is found in the host membrane. Its function is as follows. Prevents cell to cell fusion by interacting with and directing the viral OPG040 protein on the host plasma membrane. The OPG185-OPG040 complex associates with components of the entry fusion complex (EFC) presumably to avoid superinfection and syncytium formation. Via its interaction with C3/VCP protein, protects the infected cell and probably also the extracellular enveloped virus from complement attack. The polypeptide is Protein OPG185 (OPG185) (Monkeypox virus).